The primary structure comprises 171 residues: Protein-export protein SecB (171 aa).

The protein belongs to the SecB family. Homotetramer, a dimer of dimers. One homotetramer interacts with 1 SecA dimer.

Its subcellular location is the cytoplasm. Functionally, one of the proteins required for the normal export of preproteins out of the cell cytoplasm. It is a molecular chaperone that binds to a subset of precursor proteins, maintaining them in a translocation-competent state. It also specifically binds to its receptor SecA. This is Protein-export protein SecB from Granulibacter bethesdensis (strain ATCC BAA-1260 / CGDNIH1).